The primary structure comprises 712 residues: Lactoperoxidase (712 aa).

The first 22 residues, 1-22 (MWVCLQLPVFLASVTLFEVAAS), serve as a signal peptide directing secretion. The propeptide occupies 23-100 (DTIAQAASTT…WEESLKRLRR (78 aa)). Asparagine 106 is a glycosylation site (N-linked (GlcNAc...) asparagine). 4 disulfides stabilise this stretch: cysteine 123–cysteine 284, cysteine 132–cysteine 145, cysteine 246–cysteine 256, and cysteine 250–cysteine 274. N-linked (GlcNAc...) asparagine glycosylation occurs at asparagine 212. Aspartate 225 contributes to the heme b binding site. Residue histidine 226 is the Proton acceptor of the active site. Residue aspartate 227 participates in Ca(2+) binding. Threonine 301, phenylalanine 303, aspartate 305, and serine 307 together coordinate Ca(2+). At serine 315 the chain carries Phosphoserine. N-linked (GlcNAc...) asparagine glycans are attached at residues asparagine 322 and asparagine 358. The cysteines at positions 354 and 365 are disulfide-linked. Residue glutamate 375 coordinates heme b. N-linked (GlcNAc...) asparagine glycosylation occurs at asparagine 449. Histidine 468 lines the heme b pocket. At tyrosine 482 the chain carries 3'-nitrotyrosine. Cystine bridges form between cysteine 573/cysteine 630 and cysteine 671/cysteine 696.

The protein belongs to the peroxidase family. XPO subfamily. Requires Ca(2+) as cofactor. It depends on heme b as a cofactor. As to expression, mammary gland; milk.

It localises to the secreted. The protein localises to the cytoplasm. It carries out the reaction 2 a phenolic donor + H2O2 = 2 a phenolic radical donor + 2 H2O. The enzyme catalyses thiocyanate + H2O2 + H(+) = hypothiocyanous acid + H2O. The catalysed reaction is iodide + H2O2 = hypoiodite + H2O. Functionally, heme-containing oxidoreductase which catalyzes the conversion of thiocyanate (SCN(-)) into antimicrobial agent hypothiocyanous acid (OSCN(-)) in the presence of hydrogen peroxide (H2O2). Also involved in the conversion of iodide (I(-)) into hypoiodite (IO(-)) in the presence of H2O2. Responsible for the inactivation of a wide range of micro-organisms and hence, important component of defense mechanism. The lactoperoxidase-SCN(-)-H2O2 system shows antibacterial properties against some streptococci strains. The lactoperoxidase-I(-)-H2O2 system shows antibacterial properties against E.coli. May protect the udder from infection and may promote growth in newborns. May be implicated in airway host defense against infection. May contribute to maintaining an appropriate H2O2 cellular level, therefore protecting cells from H2O2-caused injuries and inflammation. The protein is Lactoperoxidase (LPO) of Bos taurus (Bovine).